We begin with the raw amino-acid sequence, 1344 residues long: DEAD-box ATP-dependent RNA helicase FANCM (1344 aa).

Residues 39–61 (SSSHFTPLANPPITANLTKPPAK) are disordered. A Helicase ATP-binding domain is found at 124–292 (ITKTALFSNT…GIIDNLQIST (169 aa)). ATP is bound at residue 137–144 (LPTGLGKT). The DEAH box signature appears at 240-243 (DEAH). One can recognise a Helicase C-terminal domain in the interval 450 to 621 (KLSKMLEILV…SFNFHPSPRM (172 aa)). Disordered regions lie at residues 765–790 (VNTS…KDYE), 1110–1148 (EVSS…TQAE), 1183–1218 (YSAG…SNQD), and 1307–1344 (KQRS…LGLW). Positions 1118-1135 (SADENEDVTGDSFEDSFI) are enriched in acidic residues. Residues 1207-1218 (TPKTTNSESNQD) show a composition bias toward polar residues. Basic and acidic residues predominate over residues 1308–1318 (QRSEAKEKEDA).

The protein belongs to the DEAD box helicase family. DEAH subfamily. FANCM sub-subfamily.

It is found in the nucleus. The enzyme catalyses ATP + H2O = ADP + phosphate + H(+). Involved in ordered homologous recombination (HR) events in somatic and meiotic cells. Involved in the suppression of spontaneous HR events in somatic cells. Has an opposite function to the DNA binding cofactor MHF1 which promotes spontaneous HR. Functions in replicative repair independently of MHF1 and in a parallel pathway to the endonuclease MUS81. Acts in the same pathway as the two DNA-binding cofactors MHF1 and MHF2 to restrain class II meiotic crossover (CO), and acts exclusively with MHF1 and MHF2 during meiosis to repair DNA interstrand cross-links (ICLs). This common pathway is in parallel to the pathway that involves the RECQ4A helicase. Seems to be involved in the stabilization of recombination intermediates. Involved in DNA double-strand break (DSB) repair during meiosis. Required for synthesis-dependent strand annealing (SDSA) and to a lesser extent for single-strand annealing (SSA). May process meiotic DSB repair intermediates, possibly D-loops, driving them toward noncrossover (NCO) resolution. This chain is DEAD-box ATP-dependent RNA helicase FANCM, found in Arabidopsis thaliana (Mouse-ear cress).